Here is a 273-residue protein sequence, read N- to C-terminus: MSQGFIEFPNIDPVLIELGPISVRWYGLMYLVGFMFALWLANRRADQPDSGWTREQVSDLLFAGFLGVVLGGRIGYVLFYNFGLFIDDPLYLFKVWTGGMSFHGGLLGVITAMLWYAKKNGRTFFGVADMIAPLVPFGLGMGRMGNFMNSELWGRVTDVPWAIVFPNGGPLPRHPSQLYEMALEGIVLFFILNWFIKKPRPLGSVSGLFLAGYGTFRFLVEYVREPDAQLGLFGGFISMGQILSLPMVIIGVLMMVWAYKRGHYKDELPQQTK.

Helical transmembrane passes span 21–41, 60–80, 95–115, 124–144, 176–196, 203–223, and 236–256; these read ISVR…LWLA, LLFA…VLFY, VWTG…AMLW, FFGV…MGRM, SQLY…NWFI, GSVS…VEYV, and FISM…LMMV. R143 provides a ligand contact to a 1,2-diacyl-sn-glycero-3-phospho-(1'-sn-glycerol).

Belongs to the Lgt family.

It is found in the cell inner membrane. It catalyses the reaction L-cysteinyl-[prolipoprotein] + a 1,2-diacyl-sn-glycero-3-phospho-(1'-sn-glycerol) = an S-1,2-diacyl-sn-glyceryl-L-cysteinyl-[prolipoprotein] + sn-glycerol 1-phosphate + H(+). The protein operates within protein modification; lipoprotein biosynthesis (diacylglyceryl transfer). Catalyzes the transfer of the diacylglyceryl group from phosphatidylglycerol to the sulfhydryl group of the N-terminal cysteine of a prolipoprotein, the first step in the formation of mature lipoproteins. In Vibrio atlanticus (strain LGP32) (Vibrio splendidus (strain Mel32)), this protein is Phosphatidylglycerol--prolipoprotein diacylglyceryl transferase.